A 72-amino-acid polypeptide reads, in one-letter code: Translation initiation factor IF-1 (72 aa).

Positions 1–72 (MAKDDVIEID…DKGRITFRYK (72 aa)) constitute an S1-like domain.

This sequence belongs to the IF-1 family. Component of the 30S ribosomal translation pre-initiation complex which assembles on the 30S ribosome in the order IF-2 and IF-3, IF-1 and N-formylmethionyl-tRNA(fMet); mRNA recruitment can occur at any time during PIC assembly.

It localises to the cytoplasm. Its function is as follows. One of the essential components for the initiation of protein synthesis. Stabilizes the binding of IF-2 and IF-3 on the 30S subunit to which N-formylmethionyl-tRNA(fMet) subsequently binds. Helps modulate mRNA selection, yielding the 30S pre-initiation complex (PIC). Upon addition of the 50S ribosomal subunit IF-1, IF-2 and IF-3 are released leaving the mature 70S translation initiation complex. This chain is Translation initiation factor IF-1, found in Sulfurovum sp. (strain NBC37-1).